We begin with the raw amino-acid sequence, 184 residues long: ATP synthase subunit delta (184 aa).

It belongs to the ATPase delta chain family. In terms of assembly, F-type ATPases have 2 components, F(1) - the catalytic core - and F(0) - the membrane proton channel. F(1) has five subunits: alpha(3), beta(3), gamma(1), delta(1), epsilon(1). F(0) has three main subunits: a(1), b(2) and c(10-14). The alpha and beta chains form an alternating ring which encloses part of the gamma chain. F(1) is attached to F(0) by a central stalk formed by the gamma and epsilon chains, while a peripheral stalk is formed by the delta and b chains.

Its subcellular location is the cell inner membrane. In terms of biological role, f(1)F(0) ATP synthase produces ATP from ADP in the presence of a proton or sodium gradient. F-type ATPases consist of two structural domains, F(1) containing the extramembraneous catalytic core and F(0) containing the membrane proton channel, linked together by a central stalk and a peripheral stalk. During catalysis, ATP synthesis in the catalytic domain of F(1) is coupled via a rotary mechanism of the central stalk subunits to proton translocation. This protein is part of the stalk that links CF(0) to CF(1). It either transmits conformational changes from CF(0) to CF(1) or is implicated in proton conduction. This is ATP synthase subunit delta from Magnetococcus marinus (strain ATCC BAA-1437 / JCM 17883 / MC-1).